A 534-amino-acid polypeptide reads, in one-letter code: Light-independent protochlorophyllide reductase subunit B (534 aa).

Residue aspartate 36 coordinates [4Fe-4S] cluster. Aspartate 274 functions as the Proton donor in the catalytic mechanism. A substrate-binding site is contributed by 409–410 (GL). A disordered region spans residues 426–446 (DEAGPSHHGGKAVPASAPRAD).

Belongs to the ChlB/BchB/BchZ family. Protochlorophyllide reductase is composed of three subunits; BchL, BchN and BchB. Forms a heterotetramer of two BchB and two BchN subunits. Requires [4Fe-4S] cluster as cofactor.

It carries out the reaction chlorophyllide a + oxidized 2[4Fe-4S]-[ferredoxin] + 2 ADP + 2 phosphate = protochlorophyllide a + reduced 2[4Fe-4S]-[ferredoxin] + 2 ATP + 2 H2O. It functions in the pathway porphyrin-containing compound metabolism; bacteriochlorophyll biosynthesis (light-independent). Its function is as follows. Component of the dark-operative protochlorophyllide reductase (DPOR) that uses Mg-ATP and reduced ferredoxin to reduce ring D of protochlorophyllide (Pchlide) to form chlorophyllide a (Chlide). This reaction is light-independent. The NB-protein (BchN-BchB) is the catalytic component of the complex. This chain is Light-independent protochlorophyllide reductase subunit B, found in Cereibacter sphaeroides (strain ATCC 17023 / DSM 158 / JCM 6121 / CCUG 31486 / LMG 2827 / NBRC 12203 / NCIMB 8253 / ATH 2.4.1.) (Rhodobacter sphaeroides).